The chain runs to 445 residues: WD repeat domain phosphoinositide-interacting protein 2 (445 aa).

A WD 1 repeat occupies 182-222 (AHDSPLAALAFDASGTKLATASEKGTVIRVFSIPEGQKLFE). The short motif at 223–226 (FRRG) is the L/FRRG motif element. WD repeat units follow at residues 228-267 (KRCVSICSLAFSMDGMFLSASSNTETVHIFKLEAVREKPP) and 311-349 (GHKNICSLTTIQKIPRLLVGASDGYLYMYNLDPQEGGEC). S395 is modified (phosphoserine).

Belongs to the WD repeat PROPPIN family. Interacts with TECPR1. Interacts with ATG16L1. Interacts with ATG5. Interacts with WIPI1. Interacts with WDR45. May interact with NUDC. Interacts with ULK1 and RB1CC1.

The protein resides in the preautophagosomal structure membrane. In terms of biological role, component of the autophagy machinery that controls the major intracellular degradation process by which cytoplasmic materials are packaged into autophagosomes and delivered to lysosomes for degradation. Involved in an early step of the formation of preautophagosomal structures. Binds and is activated by phosphatidylinositol 3-phosphate (PtdIns3P) forming on membranes of the endoplasmic reticulum upon activation of the upstream ULK1 and PI3 kinases. Mediates ER-isolation membranes contacts by interacting with the ULK1:RB1CC1 complex and PtdIns3P. Once activated, WIPI2 recruits at phagophore assembly sites the ATG12-ATG5-ATG16L1 complex that directly controls the elongation of the nascent autophagosomal membrane. The polypeptide is WD repeat domain phosphoinositide-interacting protein 2 (Mus musculus (Mouse)).